Consider the following 431-residue polypeptide: Enolase (431 aa).

Gln-163 contributes to the (2R)-2-phosphoglycerate binding site. The active-site Proton donor is the Glu-205. Residues Asp-242, Glu-288, and Asp-315 each contribute to the Mg(2+) site. (2R)-2-phosphoglycerate is bound by residues Lys-340, Arg-369, Ser-370, and Lys-391. Lys-340 serves as the catalytic Proton acceptor.

Belongs to the enolase family. Mg(2+) serves as cofactor.

It is found in the cytoplasm. The protein resides in the secreted. The protein localises to the cell surface. The catalysed reaction is (2R)-2-phosphoglycerate = phosphoenolpyruvate + H2O. The protein operates within carbohydrate degradation; glycolysis; pyruvate from D-glyceraldehyde 3-phosphate: step 4/5. Its function is as follows. Catalyzes the reversible conversion of 2-phosphoglycerate (2-PG) into phosphoenolpyruvate (PEP). It is essential for the degradation of carbohydrates via glycolysis. This Latilactobacillus sakei subsp. sakei (strain 23K) (Lactobacillus sakei subsp. sakei) protein is Enolase.